The chain runs to 420 residues: UDP-N-acetyl-D-mannosamine dehydrogenase (420 aa).

Tyr13, Ile14, Asp33, Thr85, and Thr126 together coordinate NAD(+). UDP-N-acetyl-alpha-D-mannosaminouronate contacts are provided by Arg160, Val161, Lys212, Asn216, Arg219, His250, Arg252, and Gly263. The Proton donor/acceptor role is filled by Lys212. The active-site Nucleophile is Cys266. UDP-N-acetyl-alpha-D-mannosaminouronate-binding residues include Phe330 and Lys331. Position 338 (Arg338) interacts with NAD(+). Lys416 contributes to the UDP-N-acetyl-alpha-D-mannosaminouronate binding site.

Belongs to the UDP-glucose/GDP-mannose dehydrogenase family. WecC subfamily. In terms of assembly, homodimer.

The catalysed reaction is UDP-N-acetyl-alpha-D-mannosamine + 2 NAD(+) + H2O = UDP-N-acetyl-alpha-D-mannosaminouronate + 2 NADH + 3 H(+). Its pathway is bacterial outer membrane biogenesis; enterobacterial common antigen biosynthesis. Catalyzes the four-electron oxidation of UDP-N-acetyl-D-mannosamine (UDP-ManNAc), reducing NAD(+) and releasing UDP-N-acetylmannosaminuronic acid (UDP-ManNAcA). The sequence is that of UDP-N-acetyl-D-mannosamine dehydrogenase from Salmonella typhimurium (strain LT2 / SGSC1412 / ATCC 700720).